The sequence spans 197 residues: Small ribosomal subunit protein uS4B (197 aa).

Residues 88–150 enclose the S4 RNA-binding domain; it reads SRLDNMVYRM…SRKTEMFVNN (63 aa).

The protein belongs to the universal ribosomal protein uS4 family. Part of the 30S ribosomal subunit. Contacts protein S5. The interaction surface between S4 and S5 is involved in control of translational fidelity.

One of the primary rRNA binding proteins, it binds directly to 16S rRNA where it nucleates assembly of the body of the 30S subunit. Its function is as follows. With S5 and S12 plays an important role in translational accuracy. The polypeptide is Small ribosomal subunit protein uS4B (Clostridium perfringens (strain ATCC 13124 / DSM 756 / JCM 1290 / NCIMB 6125 / NCTC 8237 / Type A)).